The primary structure comprises 377 residues: Dual-specificity RNA methyltransferase RlmN (377 aa).

The active-site Proton acceptor is the Glu-102. One can recognise a Radical SAM core domain in the interval 108–345; it reads EPDRRTLCVS…AVVRKNRGGD (238 aa). Cys-115 and Cys-350 are oxidised to a cystine. Residues Cys-122, Cys-126, and Cys-129 each contribute to the [4Fe-4S] cluster site. S-adenosyl-L-methionine-binding positions include 177–178, Ser-209, 231–233, and Asn-307; these read GE and SLN. Cys-350 acts as the S-methylcysteine intermediate in catalysis. The interval 354–377 is disordered; it reads AAEGGPGDPRRPAPPPLTRLPAAG.

Belongs to the radical SAM superfamily. RlmN family. The cofactor is [4Fe-4S] cluster.

The protein resides in the cytoplasm. The catalysed reaction is adenosine(2503) in 23S rRNA + 2 reduced [2Fe-2S]-[ferredoxin] + 2 S-adenosyl-L-methionine = 2-methyladenosine(2503) in 23S rRNA + 5'-deoxyadenosine + L-methionine + 2 oxidized [2Fe-2S]-[ferredoxin] + S-adenosyl-L-homocysteine. It catalyses the reaction adenosine(37) in tRNA + 2 reduced [2Fe-2S]-[ferredoxin] + 2 S-adenosyl-L-methionine = 2-methyladenosine(37) in tRNA + 5'-deoxyadenosine + L-methionine + 2 oxidized [2Fe-2S]-[ferredoxin] + S-adenosyl-L-homocysteine. Specifically methylates position 2 of adenine 2503 in 23S rRNA and position 2 of adenine 37 in tRNAs. m2A2503 modification seems to play a crucial role in the proofreading step occurring at the peptidyl transferase center and thus would serve to optimize ribosomal fidelity. The protein is Dual-specificity RNA methyltransferase RlmN of Anaeromyxobacter sp. (strain Fw109-5).